We begin with the raw amino-acid sequence, 251 residues long: Cell division protein ZapD (251 aa).

The protein belongs to the ZapD family. As to quaternary structure, interacts with FtsZ.

The protein localises to the cytoplasm. In terms of biological role, cell division factor that enhances FtsZ-ring assembly. Directly interacts with FtsZ and promotes bundling of FtsZ protofilaments, with a reduction in FtsZ GTPase activity. In Burkholderia multivorans (strain ATCC 17616 / 249), this protein is Cell division protein ZapD.